The following is a 428-amino-acid chain: GTPase Obg (428 aa).

The region spanning 1–158 (MFIDTAKIFV…RWVALELKLL (158 aa)) is the Obg domain. The 173-residue stretch at 159–331 (ADVGLLGFPN…VIKEAARMLK (173 aa)) folds into the OBG-type G domain. GTP is bound by residues 165–172 (GFPNVGKS), 190–194 (FTTLK), 212–215 (DVPG), 282–285 (NKCD), and 312–314 (SAA). The Mg(2+) site is built by Ser-172 and Thr-192. In terms of domain architecture, OCT spans 345-428 (RFIPEDKKFT…LNDFEFEYLL (84 aa)).

Belongs to the TRAFAC class OBG-HflX-like GTPase superfamily. OBG GTPase family. As to quaternary structure, monomer. It depends on Mg(2+) as a cofactor.

Its subcellular location is the cytoplasm. In terms of biological role, an essential GTPase which binds GTP, GDP and possibly (p)ppGpp with moderate affinity, with high nucleotide exchange rates and a fairly low GTP hydrolysis rate. Plays a role in control of the cell cycle, stress response, ribosome biogenesis and in those bacteria that undergo differentiation, in morphogenesis control. The sequence is that of GTPase Obg from Clostridium perfringens (strain ATCC 13124 / DSM 756 / JCM 1290 / NCIMB 6125 / NCTC 8237 / Type A).